An 850-amino-acid polypeptide reads, in one-letter code: Transforming growth factor beta receptor type 3 (850 aa).

The N-terminal stretch at 1-22 (MAVTSHHMVPVFVLMSACLATA) is a signal peptide. The Extracellular portion of the chain corresponds to 23 to 785 (GPEPSTRCEL…QIFHGLDTLT (763 aa)). Cysteine 54 and cysteine 199 form a disulfide bridge. Residues asparagine 143 and asparagine 491 are each glycosylated (N-linked (GlcNAc...) asparagine). Residues 454–728 (KCDNEKMVVA…PKCVTPDDAC (275 aa)) enclose the ZP domain. The interval 528 to 557 (SPGDSSGWPDGYEDLESGDNGFPGDTDEGE) is disordered. O-linked (Xyl...) (glycosaminoglycan) serine glycans are attached at residues serine 533 and serine 544. N-linked (GlcNAc...) asparagine glycosylation is found at asparagine 570, asparagine 589, and asparagine 696. 3 cysteine pairs are disulfide-bonded: cysteine 638–cysteine 704, cysteine 659–cysteine 728, and cysteine 709–cysteine 721. The segment at 735–749 (MIWTMMQNKKTFTKP) is interaction with TGF-beta ligand. The helical transmembrane segment at 786-808 (VMGIAFAAFVIGALLTGALWYIY) threads the bilayer. The Cytoplasmic portion of the chain corresponds to 809-850 (SHTGETARRQQVPTSPPASENSSAAHSIGSTQSTPCSSSSTA). Over residues 817–833 (RQQVPTSPPASENSSAA) the composition is skewed to polar residues. The disordered stretch occupies residues 817–850 (RQQVPTSPPASENSSAAHSIGSTQSTPCSSSSTA). A compositionally biased stretch (low complexity) spans 835–850 (SIGSTQSTPCSSSSTA). The residue at position 839 (threonine 839) is a Phosphothreonine.

As to quaternary structure, forms homodimers and homooligomers. Interacts with DYNLT4. Interacts with integrin ITGA5:ITGB1; this interaction promotes the internalization and trafficking of ITGA5:ITGB1 into endocytic vesicles. Interacts with TGFB1, BMP2, BMP5, BMP7 or GDF5 and inhibin A via the ligand binding domains. Interacts with ALK3/BMPR1A; this interaction results in the cell surface retention of BMPR1A. Interacts with ALK6/BMPR1B; this interaction enhances BMPR1B-mediated stimulation of the BMP signaling pathway. Interacts with the scaffolding protein beta-arrestin2/ARRB2; this interaction mediates internalization of TGFBR3 and thus regulates migration, actin cytoskeleton and activation of CDC42. Extensively modified by glycosaminoglycan groups (GAG). Post-translationally, phosphorylated in the cytoplasmic domain by the type II receptor TGFBR2 at THR-839 to mediate recruitment of ARRB2 and subsequent internalization of TGFBR2 and TGFBR3.

The protein resides in the cell membrane. It is found in the secreted. Its subcellular location is the extracellular space. It localises to the extracellular matrix. Functionally, cell surface receptor that regulates diverse cellular processes including cell proliferation, differentiation, migration, and apoptosis. Initiates BMP, inhibin, and TGF-beta signaling pathways by interacting with different ligands including TGFB1, BMP2, BMP5, BMP7 or GDF5. Alternatively, acts as a cell surface coreceptor for BMP ligands, serving to enhance ligand binding by differentially regulating BMPR1A/ALK3 and BMPR1B/ALK6 receptor trafficking. Promotes epithelial cell adhesion, focal adhesion formation and integrin signaling during epithelial cell spreading on fibronectin. By interacting with the scaffolding protein beta-arrestin2/ARRB2, regulates migration or actin cytoskeleton and promotes the activation of CDC42 as well as the inhibition of NF-kappa-B. In gonadotrope cells, acts as an inhibin A coreceptor and regulates follicle-stimulating hormone (FSH) levels and female fertility. Plays a role in the inhibition of directed and random cell migration in epithelial cells by altering the actin cytoskeletal organization. Participates in epithelial-mesenchymal transformation (EMT) upon binding to BMP2 or TGFB2, by activating the PAR6/SMURF1/RHOA pathway. The sequence is that of Transforming growth factor beta receptor type 3 (Tgfbr3) from Mus musculus (Mouse).